Consider the following 694-residue polypeptide: U-box domain-containing protein 1 (694 aa).

The 75-residue stretch at 292–366 folds into the U-box domain; the sequence is NIPDEFRCPI…HQWCYENNVK (75 aa). ARM repeat units follow at residues 392 to 432, 435 to 474, 476 to 516, 519 to 558, 560 to 599, 601 to 641, and 646 to 685; these read SENK…LLAK, MDNRRIIAEVGAIPFLVTLLVSKDSRIQEHVVTALFNLSI, DNNK…SLSM, DCKVQIGASSRAIPALVGLLKEGTIIGKRDAATALFNLAV, NPNKLSIVKSGAVTLLVELLMDDKAGITDDSLAVLAVLLG, SEGL…GLCK, and LVAMRLLANPRSIPSLQSLAADGSLRARRKADALLRLLNR.

In terms of assembly, interacts with LYK3. Binds to NORK/DMI2. Post-translationally, phosphorylated by LYK3 in vitro. Phosphorylated by NORK/DMI2. As to expression, present ubiquitously at very low levels during nonsymbiotic growth. Accumulates in roots and nodules during symbiotic growth with rhizobia and mycorrhiza.

The protein localises to the cell membrane. The catalysed reaction is S-ubiquitinyl-[E2 ubiquitin-conjugating enzyme]-L-cysteine + [acceptor protein]-L-lysine = [E2 ubiquitin-conjugating enzyme]-L-cysteine + N(6)-ubiquitinyl-[acceptor protein]-L-lysine.. The protein operates within protein modification; protein ubiquitination. Its function is as follows. Exhibits U-box-dependent E3 ubiquitin ligase activity in vitro. Negatively modulates successive stages of infection and development of rhizobial (e.g. Sinorhizobium meliloti) and arbuscular mycorrhizal fungi (AM, e.g. Rhizophagus irregularis) symbioses, in an ubiquitin ligase activity-dependent manner. Negative regulator of the LYK3 signaling pathway leading to nitrogen-fixing symbiosis (e.g. infection and nodulation) by rhizobia. May be involved in the discrimination of rhizobium strains producing variant Nod factors. The protein is U-box domain-containing protein 1 of Medicago truncatula (Barrel medic).